Reading from the N-terminus, the 251-residue chain is tRNA-cytidine(32) 2-sulfurtransferase 2 (251 aa).

Residues 33–38 carry the PP-loop motif motif; the sequence is SGGKDS. Positions 108, 111, and 199 each coordinate [4Fe-4S] cluster.

The protein belongs to the TtcA family. As to quaternary structure, homodimer. Mg(2+) serves as cofactor. The cofactor is [4Fe-4S] cluster.

It localises to the cytoplasm. The catalysed reaction is cytidine(32) in tRNA + S-sulfanyl-L-cysteinyl-[cysteine desulfurase] + AH2 + ATP = 2-thiocytidine(32) in tRNA + L-cysteinyl-[cysteine desulfurase] + A + AMP + diphosphate + H(+). It functions in the pathway tRNA modification. Functionally, catalyzes the ATP-dependent 2-thiolation of cytidine in position 32 of tRNA, to form 2-thiocytidine (s(2)C32). The sulfur atoms are provided by the cysteine/cysteine desulfurase (IscS) system. This Francisella tularensis subsp. tularensis (strain FSC 198) protein is tRNA-cytidine(32) 2-sulfurtransferase 2.